Consider the following 136-residue polypeptide: Large-conductance mechanosensitive channel (136 aa).

The Cytoplasmic portion of the chain corresponds to 1 to 16 (MGLLSEFKAFAVKGNV). A helical transmembrane segment spans residues 17-45 (VDMAVGIIIGAAFGKIVSSFVGDVIMPPI). At 46–73 (GLLIGGVDFSDLAITLKAEGDVPAVVLA) the chain is on the extracellular side. A helical transmembrane segment spans residues 74-93 (YRKFIQTVLNFVIVAFAIFM). The Cytoplasmic portion of the chain corresponds to 94 to 136 (GVKAINRLKREEAVAPSEPPVPSAEETLLTEIRDLLKAQQNKS).

Belongs to the MscL family. Homopentamer.

The protein resides in the cell inner membrane. In terms of biological role, channel that opens in response to stretch forces in the membrane lipid bilayer. Forms a nonselective ion channel with a conductance of about 4 nanosiemens. May participate in the regulation of osmotic pressure changes within the cell. The polypeptide is Large-conductance mechanosensitive channel (Pseudomonas fluorescens).